The primary structure comprises 641 residues: Leucine-rich repeat receptor-like serine/threonine/tyrosine-protein kinase SOBIR1 (641 aa).

Positions 1-31 (MAVPTGSANLFLRPLILAVLSFLLLSSFVSS) are cleaved as a signal peptide. Over 32 to 284 (VEWLDIDSSD…KKKKSKKKKV (253 aa)) the chain is Extracellular. 5 LRR repeats span residues 112 to 133 (ELKE…DILS), 136 to 159 (QLEV…SSLS), 160 to 182 (RLRI…KNLR), 183 to 205 (NLEN…IVSF), and 207 to 228 (NLRF…VMSS). Residue Asn-154 is glycosylated (N-linked (GlcNAc...) asparagine). Asn-186 carries N-linked (GlcNAc...) asparagine glycosylation. The segment at 243 to 278 (AETPTSSPTNKPNNSTTSKAPKGAPKPGKLKKKKKK) is disordered. The segment covering 245–259 (TPTSSPTNKPNNSTT) has biased composition (polar residues). Asn-256 carries an N-linked (GlcNAc...) asparagine glycan. Positions 260 to 269 (SKAPKGAPKP) are enriched in low complexity. A helical membrane pass occupies residues 285–305 (AAWILGFVVGAIGGTISGFVF). Over 306–641 (SVLFKLIIQA…VRTMLSQIKH (336 aa)) the chain is Cytoplasmic. The Protein kinase domain maps to 347-641 (LASLEIIGRG…VRTMLSQIKH (295 aa)). ATP contacts are provided by residues 353–361 (IGRGGCGEV) and Lys-377. The active-site Proton acceptor is Asp-489.

The protein belongs to the protein kinase superfamily. Ser/Thr protein kinase family. Interacts with CST. Interacts with RLP23. Component of a trimeric complex composed of RLP23, SOBIR1 and BAK1. BAK1 is recruited into a pre-formed RLP23-SOBIR1 complex in a ligand-dependent manner. Autophosphorylated on Ser, Thr and Tyr residues. Mostly present in leaves and flowers, with increasing expression in older flowers.

It localises to the cell membrane. The enzyme catalyses L-seryl-[protein] + ATP = O-phospho-L-seryl-[protein] + ADP + H(+). It carries out the reaction L-threonyl-[protein] + ATP = O-phospho-L-threonyl-[protein] + ADP + H(+). The catalysed reaction is L-tyrosyl-[protein] + ATP = O-phospho-L-tyrosyl-[protein] + ADP + H(+). Dual specificity kinase acting on both serine/threonine- and tyrosine-containing substrates. Acting as a counterplayer of BIR1, promotes the activation of plant defense and cell death. Component of the RLP23-SOBIR1-BAK1 complex that mediates NLP-triggered immunity. Functions as an inhibitor/regulator of abscission, probably by regulating membrane trafficking during abscission. The polypeptide is Leucine-rich repeat receptor-like serine/threonine/tyrosine-protein kinase SOBIR1 (SOBIR1) (Arabidopsis thaliana (Mouse-ear cress)).